The following is a 217-amino-acid chain: Large ribosomal subunit protein bL25 (217 aa).

Low complexity predominate over residues 195-211; the sequence is PAEGAAAAPAKGAAKGA. The tract at residues 195 to 217 is disordered; the sequence is PAEGAAAAPAKGAAKGAAKGGKK.

Belongs to the bacterial ribosomal protein bL25 family. CTC subfamily. As to quaternary structure, part of the 50S ribosomal subunit; part of the 5S rRNA/L5/L18/L25 subcomplex. Contacts the 5S rRNA. Binds to the 5S rRNA independently of L5 and L18.

This is one of the proteins that binds to the 5S RNA in the ribosome where it forms part of the central protuberance. The chain is Large ribosomal subunit protein bL25 from Acidiphilium cryptum (strain JF-5).